We begin with the raw amino-acid sequence, 81 residues long: Protein Vpu (81 aa).

The Extracellular segment spans residues 1-6 (MQPIQI). The chain crosses the membrane as a helical span at residues 7-27 (AIAALVVAIIIAIVVWSIVII). Residues 28 to 81 (EYRKILRQRKIDRLIDRLIERAEDSGNESEGEISALVEMGVEMGHHAPWDIDDL) lie on the Cytoplasmic side of the membrane. Phosphoserine; by host CK2 is present on residues serine 52 and serine 56.

It belongs to the HIV-1 VPU protein family. Homopentamer. Interacts with host CD4 and BRTC; these interactions induce proteasomal degradation of CD4. Interacts with host BST2; this interaction leads to the degradation of host BST2. Interacts with host FBXW11. Interacts with host AP1M1; this interaction plays a role in the mistrafficking and subsequent degradation of host BST2. Interacts with host RANBP2; this interaction allows Vpu to down-regulate host BLM sumoylation. Post-translationally, phosphorylated by host CK2. This phosphorylation is necessary for interaction with human BTRC and degradation of CD4.

It localises to the host membrane. Its activity is regulated as follows. Ion channel activity is inhibited by hexamethylene amiloride in vitro. Functionally, enhances virion budding by targeting host CD4 and Tetherin/BST2 to proteasome degradation. Degradation of CD4 prevents any unwanted premature interactions between viral Env and its host receptor CD4 in the endoplasmic reticulum. Degradation of antiretroviral protein Tetherin/BST2 is important for virion budding, as BST2 tethers new viral particles to the host cell membrane. Mechanistically, Vpu bridges either CD4 or BST2 to BTRC, a substrate recognition subunit of the Skp1/Cullin/F-box protein E3 ubiquitin ligase, induces their ubiquitination and subsequent proteasomal degradation. The alteration of the E3 ligase specificity by Vpu seems to promote the degradation of host IKBKB, leading to NF-kappa-B down-regulation and subsequent apoptosis. Acts as a viroporin that forms an oligomeric ion channel in membranes. Modulates the host DNA repair mechanisms to promote degradation of nuclear viral cDNA in cells that are already productively infected in order to suppress immune sensing and proviral hyper-integration (superinfection). Manipulates PML-NBs and modulates SUMOylation of host BLM protein thereby enhancing its DNA-end processing activity toward viral unintegrated linear DNA. Also inhibits RAD52-mediated homologous repair of viral cDNA, preventing the generation of dead-end circular forms of single copies of the long terminal repeat and permitting sustained nucleolytic attack. The polypeptide is Protein Vpu (Homo sapiens (Human)).